We begin with the raw amino-acid sequence, 520 residues long: ATP-dependent clpX-like chaperone, mitochondrial (520 aa).

The N-terminal 13 residues, 1–13, are a transit peptide targeting the mitochondrion; that stretch reads MLKSASQNFFRAY. 140 to 147 contributes to the ATP binding site; sequence GPSGSGKT.

The protein belongs to the ClpX chaperone family. In terms of assembly, homohexamer that forms a ring structure; this hexamerization requires ATP binding. Interacts with HEM1.

The protein resides in the mitochondrion inner membrane. Functionally, ATP-dependent unfoldase that stimulates the incorporation of the pyridoxal phosphate cofactor into 5-aminolevulinate synthase (HEM1), thereby activating 5-aminolevulinate (ALA) synthesis, the first step in heme biosynthesis. Up-regulates heme biosynthesis. The chain is ATP-dependent clpX-like chaperone, mitochondrial from Saccharomyces cerevisiae (strain ATCC 204508 / S288c) (Baker's yeast).